Here is a 133-residue protein sequence, read N- to C-terminus: Large-conductance mechanosensitive channel (133 aa).

2 consecutive transmembrane segments (helical) span residues 19–39 (IDLAVGVVIGGAFGKIVTSLV) and 79–99 (IQSVVDFIIISFSIFLFVKLI).

This sequence belongs to the MscL family. As to quaternary structure, homopentamer.

The protein localises to the cell membrane. Functionally, channel that opens in response to stretch forces in the membrane lipid bilayer. May participate in the regulation of osmotic pressure changes within the cell. The protein is Large-conductance mechanosensitive channel of Clostridium tetani (strain Massachusetts / E88).